Consider the following 648-residue polypeptide: Threonine--tRNA ligase (648 aa).

A TGS domain is found at 1-61; sequence MIDIILPDGS…INTATVKAIT (61 aa). A catalytic region spans residues 243–549; that stretch reads DHRKLGRELE…LIEHYSGKLP (307 aa). Positions 349, 400, and 526 each coordinate Zn(2+).

This sequence belongs to the class-II aminoacyl-tRNA synthetase family. As to quaternary structure, homodimer. Zn(2+) is required as a cofactor.

The protein resides in the cytoplasm. It carries out the reaction tRNA(Thr) + L-threonine + ATP = L-threonyl-tRNA(Thr) + AMP + diphosphate + H(+). Catalyzes the attachment of threonine to tRNA(Thr) in a two-step reaction: L-threonine is first activated by ATP to form Thr-AMP and then transferred to the acceptor end of tRNA(Thr). Also edits incorrectly charged L-seryl-tRNA(Thr). The protein is Threonine--tRNA ligase of Orientia tsutsugamushi (strain Ikeda) (Rickettsia tsutsugamushi).